The chain runs to 63 residues: MPKNKSHSGASRRFRVTGTGKIMRRRTNKNHLLEHKPSKRTRRLSVDVRVSPADARKIRKLLG.

It belongs to the bacterial ribosomal protein bL35 family.

This chain is Large ribosomal subunit protein bL35, found in Thermobifida fusca (strain YX).